A 602-amino-acid chain; its full sequence is MDSRVSGTTSNGETKPVYPVMEKKEEDGTLERGHWNNKMEFVLSVAGEIIGLGNVWRFPYLCYKNGGGAFFIPYLVFLFTCGIPVFLLETALGQYTSQGGVTAWRKICPIFEGIGYASQMIVILLNVYYIIVLAWALFYLFSSFTIDLPWGGCYHEWNTEHCMEFQKTNGSLNGTSENATSPVIEFWERRVLKISDGIQHLGALRWELALCLLLAWVICYFCIWKGVKSTGKVVYFTATFPYLMLVVLLIRGVTLPGAAQGIQFYLYPNLTRLWDPQVWMDAGTQIFFSFAICLGCLTALGSYNKYHNNCYRDCIALCFLNSGTSFVAGFAIFSILGFMSQEQGVPISEVAESGPGLAFIAYPRAVVMLPFSPLWACCFFFMVVLLGLDSQFVCVESLVTALVDMYPHVFRKKNRREVLILGVSVVSFLVGLIMLTEGGMYVFQLFDYYAASGMCLLFVAIFESLCVAWVYGAKRFYDNIEDMIGYRPWPLIKYCWLFLTPAVCTATFLFSLIKYTPLTYNKKYTYPWWGDALGWLLALSSMVCIPAWSLYRLGTLKGPFRERIRQLMCPAEDLPQRNPAGPSAPATPRTSLLRLTELESHC.

The segment covering 1–13 (MDSRVSGTTSNGE) has biased composition (polar residues). The disordered stretch occupies residues 1-22 (MDSRVSGTTSNGETKPVYPVME). Topologically, residues 1–40 (MDSRVSGTTSNGETKPVYPVMEKKEEDGTLERGHWNNKME) are cytoplasmic. The next 3 helical transmembrane spans lie at 41–61 (FVLS…FPYL), 68–88 (GAFF…VFLL), and 121–141 (IVIL…FYLF). The Extracellular portion of the chain corresponds to 142 to 206 (SSFTIDLPWG…GIQHLGALRW (65 aa)). A disulfide bond links cysteine 153 and cysteine 162. Asparagine 173 is a glycosylation site (N-linked (GlcNAc...) asparagine). Transmembrane regions (helical) follow at residues 207-227 (ELAL…WKGV) and 233-253 (VVYF…IRGV). A glycan (N-linked (GlcNAc...) asparagine) is linked at asparagine 269. A run of 7 helical transmembrane segments spans residues 282-302 (AGTQ…ALGS), 319-339 (FLNS…LGFM), 366-386 (VVML…VVLL), 418-438 (VLIL…LTEG), 453-473 (GMCL…VYGA), 490-510 (PLIK…TFLF), and 528-548 (WWGD…IPAW). Over 549–602 (SLYRLGTLKGPFRERIRQLMCPAEDLPQRNPAGPSAPATPRTSLLRLTELESHC) the chain is Cytoplasmic. A Phosphothreonine modification is found at threonine 587. Serine 591 carries the post-translational modification Phosphoserine.

Belongs to the sodium:neurotransmitter symporter (SNF) (TC 2.A.22) family. SLC6A13 subfamily. As to expression, expressed in brain, kidney, lung, liver and testis.

Its subcellular location is the cell membrane. The protein localises to the basolateral cell membrane. It carries out the reaction 4-aminobutanoate(out) + chloride(out) + 2 Na(+)(out) = 4-aminobutanoate(in) + chloride(in) + 2 Na(+)(in). It catalyses the reaction taurine(out) + chloride(out) + 2 Na(+)(out) = taurine(in) + chloride(in) + 2 Na(+)(in). The enzyme catalyses beta-alanine(out) + chloride(out) + 2 Na(+)(out) = beta-alanine(in) + chloride(in) + 2 Na(+)(in). The catalysed reaction is hypotaurine(out) + chloride(out) + 2 Na(+)(out) = hypotaurine(in) + chloride(in) + 2 Na(+)(in). Its activity is regulated as follows. GABA transport is inhibited by beta-alanine, 2,3-diaminopropionic acid and SNAP-5114. Its function is as follows. Mediates sodium- and chloride-dependent transport of gamma-aminobutyric acid (GABA). Mediates transport of beta-alanine. Can also mediate transport of taurine and hypotaurine. In Homo sapiens (Human), this protein is Sodium- and chloride-dependent GABA transporter 2 (SLC6A13).